Reading from the N-terminus, the 566-residue chain is Protein RocB (566 aa).

Its function is as follows. Involved in arginine degradative pathway. The protein is Protein RocB (rocB) of Bacillus subtilis (strain 168).